The primary structure comprises 338 residues: Glycerol-3-phosphate dehydrogenase [NAD(P)+] (338 aa).

Tryptophan 11, arginine 30, and lysine 107 together coordinate NADPH. 3 residues coordinate sn-glycerol 3-phosphate: lysine 107, glycine 140, and serine 142. Alanine 144 contacts NADPH. Residues lysine 195, aspartate 248, serine 258, arginine 259, and asparagine 260 each contribute to the sn-glycerol 3-phosphate site. Lysine 195 functions as the Proton acceptor in the catalytic mechanism. Residue arginine 259 coordinates NADPH. NADPH-binding residues include valine 283 and glutamate 285.

This sequence belongs to the NAD-dependent glycerol-3-phosphate dehydrogenase family.

The protein localises to the cytoplasm. The enzyme catalyses sn-glycerol 3-phosphate + NAD(+) = dihydroxyacetone phosphate + NADH + H(+). It carries out the reaction sn-glycerol 3-phosphate + NADP(+) = dihydroxyacetone phosphate + NADPH + H(+). Its pathway is membrane lipid metabolism; glycerophospholipid metabolism. Catalyzes the reduction of the glycolytic intermediate dihydroxyacetone phosphate (DHAP) to sn-glycerol 3-phosphate (G3P), the key precursor for phospholipid synthesis. This is Glycerol-3-phosphate dehydrogenase [NAD(P)+] from Ralstonia nicotianae (strain ATCC BAA-1114 / GMI1000) (Ralstonia solanacearum).